Consider the following 417-residue polypeptide: Lipoyl synthase, mitochondrial (417 aa).

A mitochondrion-targeting transit peptide spans 1 to 26 (MAVCARGLRCLGTPAVSLRLAASRSY). A disordered region spans residues 27–61 (ATTTPPDPAIPNTPGAAATSSPAKRPRTSFQDKLN). A compositionally biased stretch (polar residues) spans 44 to 58 (ATSSPAKRPRTSFQD). [4Fe-4S] cluster is bound by residues C134, C139, C145, C165, C169, C172, and S380. A Radical SAM core domain is found at 148–369 (GGSKSAATAT…KEKALEMGFL (222 aa)). A disordered region spans residues 398-417 (ESTGPGSASVQDVATGDLVR).

Belongs to the radical SAM superfamily. Lipoyl synthase family. [4Fe-4S] cluster is required as a cofactor.

Its subcellular location is the mitochondrion. The enzyme catalyses [[Fe-S] cluster scaffold protein carrying a second [4Fe-4S](2+) cluster] + N(6)-octanoyl-L-lysyl-[protein] + 2 oxidized [2Fe-2S]-[ferredoxin] + 2 S-adenosyl-L-methionine + 4 H(+) = [[Fe-S] cluster scaffold protein] + N(6)-[(R)-dihydrolipoyl]-L-lysyl-[protein] + 4 Fe(3+) + 2 hydrogen sulfide + 2 5'-deoxyadenosine + 2 L-methionine + 2 reduced [2Fe-2S]-[ferredoxin]. It participates in protein modification; protein lipoylation via endogenous pathway; protein N(6)-(lipoyl)lysine from octanoyl-[acyl-carrier-protein]: step 2/2. In terms of biological role, catalyzes the radical-mediated insertion of two sulfur atoms into the C-6 and C-8 positions of the octanoyl moiety bound to the lipoyl domains of lipoate-dependent enzymes, thereby converting the octanoylated domains into lipoylated derivatives. This chain is Lipoyl synthase, mitochondrial, found in Uncinocarpus reesii (strain UAMH 1704).